A 354-amino-acid polypeptide reads, in one-letter code: Glutamine synthetase (354 aa).

A GS beta-grasp domain is found at 22–101 (FHAEYVWIDG…VLSETYNNDG (80 aa)). A GS catalytic domain is found at 108–354 (HRHHTAKVME…IIIETTILDK (247 aa)).

It belongs to the glutamine synthetase family. Homooctamer.

The protein localises to the cytoplasm. The enzyme catalyses L-glutamate + NH4(+) + ATP = L-glutamine + ADP + phosphate + H(+). This is Glutamine synthetase (GLN1) from Amanita muscaria (Fly agaric).